We begin with the raw amino-acid sequence, 455 residues long: NADH-quinone oxidoreductase subunit N (455 aa).

Helical transmembrane passes span 25–45, 61–81, 99–119, 149–169, 193–213, 257–277, 285–305, 312–332, 355–375, 391–411, and 432–452; these read AIVP…ISEY, FSVA…ALSH, VFLL…MFFL, FLMG…IYGA, IGIV…PFHF, IQII…IMAL, MFAF…LLTS, LYYA…VMYV, AGIL…SGFF, IVVF…FKII, and IVAV…NVVL.

This sequence belongs to the complex I subunit 2 family. In terms of assembly, NDH-1 is composed of 14 different subunits. Subunits NuoA, H, J, K, L, M, N constitute the membrane sector of the complex.

It is found in the cell inner membrane. It carries out the reaction a quinone + NADH + 5 H(+)(in) = a quinol + NAD(+) + 4 H(+)(out). Its function is as follows. NDH-1 shuttles electrons from NADH, via FMN and iron-sulfur (Fe-S) centers, to quinones in the respiratory chain. The immediate electron acceptor for the enzyme in this species is believed to be a menaquinone. Couples the redox reaction to proton translocation (for every two electrons transferred, four hydrogen ions are translocated across the cytoplasmic membrane), and thus conserves the redox energy in a proton gradient. The chain is NADH-quinone oxidoreductase subunit N from Flavobacterium psychrophilum (strain ATCC 49511 / DSM 21280 / CIP 103535 / JIP02/86).